A 171-amino-acid chain; its full sequence is Ribosome maturation factor RimM (171 aa).

The PRC barrel domain occupies aspartate 93–leucine 167.

It belongs to the RimM family. As to quaternary structure, binds ribosomal protein uS19.

It localises to the cytoplasm. In terms of biological role, an accessory protein needed during the final step in the assembly of 30S ribosomal subunit, possibly for assembly of the head region. Essential for efficient processing of 16S rRNA. May be needed both before and after RbfA during the maturation of 16S rRNA. It has affinity for free ribosomal 30S subunits but not for 70S ribosomes. The polypeptide is Ribosome maturation factor RimM (Lactobacillus helveticus (strain DPC 4571)).